Consider the following 186-residue polypeptide: Pyridoxal 5'-phosphate synthase subunit PdxT (186 aa).

An L-glutamine-binding site is contributed by 47-49 (GES). The active-site Nucleophile is the cysteine 79. L-glutamine contacts are provided by residues arginine 106 and 134-135 (IR). Catalysis depends on charge relay system residues histidine 170 and glutamate 172.

The protein belongs to the glutaminase PdxT/SNO family. In the presence of PdxS, forms a dodecamer of heterodimers. Only shows activity in the heterodimer.

It carries out the reaction aldehydo-D-ribose 5-phosphate + D-glyceraldehyde 3-phosphate + L-glutamine = pyridoxal 5'-phosphate + L-glutamate + phosphate + 3 H2O + H(+). The enzyme catalyses L-glutamine + H2O = L-glutamate + NH4(+). Its pathway is cofactor biosynthesis; pyridoxal 5'-phosphate biosynthesis. In terms of biological role, catalyzes the hydrolysis of glutamine to glutamate and ammonia as part of the biosynthesis of pyridoxal 5'-phosphate. The resulting ammonia molecule is channeled to the active site of PdxS. The protein is Pyridoxal 5'-phosphate synthase subunit PdxT of Methanothrix thermoacetophila (strain DSM 6194 / JCM 14653 / NBRC 101360 / PT) (Methanosaeta thermophila).